The sequence spans 116 residues: Methionine-R-sulfoxide reductase B1 (116 aa).

The MsrB domain occupies 1–106; sequence MSFCSFFGGE…FSSSLKFVPK (106 aa). The Zn(2+) site is built by Cys23, Cys26, Cys71, and Cys74. Residue Sec95 is the Nucleophile of the active site. Position 95 (Sec95) is a non-standard amino acid, selenocysteine.

This sequence belongs to the MsrB Met sulfoxide reductase family. It depends on Zn(2+) as a cofactor. Truncated MSRB1/SEPX1 proteins produced by failed UGA/Sec decoding are ubiquitinated by the CRL2(FEM1C) E3 ubiquitin-protein ligase complex.

It is found in the cytoplasm. It localises to the nucleus. The protein resides in the cytoskeleton. It catalyses the reaction L-methionyl-[protein] + [thioredoxin]-disulfide + H2O = L-methionyl-(R)-S-oxide-[protein] + [thioredoxin]-dithiol. It carries out the reaction [thioredoxin]-disulfide + L-methionine + H2O = L-methionine (R)-S-oxide + [thioredoxin]-dithiol. Methionine-sulfoxide reductase that specifically reduces methionine (R)-sulfoxide back to methionine. While in many cases, methionine oxidation is the result of random oxidation following oxidative stress, methionine oxidation is also a post-translational modification that takes place on specific residue. Acts as a regulator of actin assembly by reducing methionine (R)-sulfoxide mediated by MICALs (MICAL1, MICAL2 or MICAL3) on actin, thereby promoting filament repolymerization. Plays a role in innate immunity by reducing oxidized actin, leading to actin repolymerization in macrophages. The chain is Methionine-R-sulfoxide reductase B1 (Msrb1) from Mus musculus (Mouse).